Reading from the N-terminus, the 353-residue chain is Ubiquinol oxidase 2, mitochondrial (353 aa).

Residues 1-21 constitute a mitochondrion transit peptide; that stretch reads MSQLITKAALRVLLVCGRGNC. Residues 178–198 form a helical membrane-spanning segment; that stretch reads AMMLETVAAVPGMVGGMLLHL. Fe cation-binding residues include glutamate 182, glutamate 221, and histidine 224. A helical transmembrane segment spans residues 240–260; the sequence is LLVMLVQGIFFNSFFVCYVIS. Residues glutamate 272, glutamate 323, and histidine 326 each coordinate Fe cation.

This sequence belongs to the alternative oxidase family. Homodimer; disulfide-linked. Requires Fe cation as cofactor. As to expression, maximally expressed in dry seeds. Detected in roots, stems and leaves.

Its subcellular location is the mitochondrion inner membrane. The enzyme catalyses 2 a ubiquinol + O2 = 2 a ubiquinone + 2 H2O. Its function is as follows. Catalyzes the cyanide-resistant oxidation of ubiquinol and the reduction of molecular oxygen to water, but does not translocate protons and consequently is not linked to oxidative phosphorylation. May increase respiration when the cytochrome respiratory pathway is restricted, or in response to low temperatures. This chain is Ubiquinol oxidase 2, mitochondrial (AOX2), found in Arabidopsis thaliana (Mouse-ear cress).